Consider the following 127-residue polypeptide: Large ribosomal subunit protein mL55 (127 aa).

A mitochondrion-targeting transit peptide spans 1-32 (MPLAILLSLLRHCGVRAALPTPRHLHTSPWRA). A Phosphoserine modification is found at Ser84.

Belongs to the mitochondrion-specific ribosomal protein mL55 family. In terms of assembly, component of the mitochondrial ribosome large subunit (39S) which comprises a 16S rRNA and about 50 distinct proteins.

It is found in the mitochondrion. This is Large ribosomal subunit protein mL55 (Mrpl55) from Mus musculus (Mouse).